A 387-amino-acid polypeptide reads, in one-letter code: MTQETYPSCSFPAHPRSWVEIDGRALRFNIRVARERIPKKTKIIAVVKSEAYGHGLIPIAKELVHSGVEVLGINNIDEAIELRQAGIRSALLILCPILPSEASIIVSYNVGVVISSYNEAKWLSQAAERQGKKAIVHIKIDTGMGRLGFIPSQFIQEMEKIKRLSSLSIAAICTHFSQAETDIEATEKQWLELLKFRHYFKGLPIHVANSAALWRKSVYACDYVRIGLALYGIAPMPFLRRFLKPILTWKCKIVLIKELPRGHPISYGATYKLKKPSRIAVLSVGYGDGYCRSLSNKASVLIKGKRCPVRGAITMNLLMVDITDLPSCKVGDEAVLLGTQGKESITADELAKLSQTISYEIITNIHSHIRRNYRHFLSHSNELSLYE.

The active-site Proton acceptor; specific for D-alanine is the Lys-48. Lys-48 bears the N6-(pyridoxal phosphate)lysine mark. Arg-146 contributes to the substrate binding site. Tyr-267 acts as the Proton acceptor; specific for L-alanine in catalysis. Met-315 lines the substrate pocket.

Belongs to the alanine racemase family. Requires pyridoxal 5'-phosphate as cofactor.

It catalyses the reaction L-alanine = D-alanine. The protein operates within amino-acid biosynthesis; D-alanine biosynthesis; D-alanine from L-alanine: step 1/1. Catalyzes the interconversion of L-alanine and D-alanine. May also act on other amino acids. This chain is Alanine racemase (alr), found in Methylacidiphilum infernorum (isolate V4) (Methylokorus infernorum (strain V4)).